The following is a 228-amino-acid chain: Probable endo-1,4-beta-xylanase A (228 aa).

Residues 1–18 (MVSFSYLLLACSAIGALA) form the signal peptide. Asn29 carries N-linked (GlcNAc...) asparagine glycosylation. Residues 40–228 (AGTPSSTGWN…SSGSASITVY (189 aa)) form the GH11 domain. The active-site Nucleophile is the Glu124. Glu215 functions as the Proton donor in the catalytic mechanism.

This sequence belongs to the glycosyl hydrolase 11 (cellulase G) family.

Its subcellular location is the secreted. The catalysed reaction is Endohydrolysis of (1-&gt;4)-beta-D-xylosidic linkages in xylans.. It functions in the pathway glycan degradation; xylan degradation. In terms of biological role, endo-1,4-beta-xylanase involved in the hydrolysis of xylan, a major structural heterogeneous polysaccharide found in plant biomass representing the second most abundant polysaccharide in the biosphere, after cellulose. In Aspergillus fumigatus (strain CBS 144.89 / FGSC A1163 / CEA10) (Neosartorya fumigata), this protein is Probable endo-1,4-beta-xylanase A (xlnA).